We begin with the raw amino-acid sequence, 345 residues long: Phenylalanine--tRNA ligase alpha subunit (345 aa).

Mg(2+) is bound at residue Glu259.

The protein belongs to the class-II aminoacyl-tRNA synthetase family. Phe-tRNA synthetase alpha subunit type 1 subfamily. As to quaternary structure, tetramer of two alpha and two beta subunits. Requires Mg(2+) as cofactor.

Its subcellular location is the cytoplasm. It carries out the reaction tRNA(Phe) + L-phenylalanine + ATP = L-phenylalanyl-tRNA(Phe) + AMP + diphosphate + H(+). The sequence is that of Phenylalanine--tRNA ligase alpha subunit from Lactococcus lactis subsp. cremoris (strain SK11).